The primary structure comprises 535 residues: MDHSAKTTQNRVLSVKMWPPSKSTRLMLVERMTKNITTPSIFSRKYGLLSVEEAEQDAKRIEDLAFATANKHFQNEPDGDGTSAVHVYAKESSKLMLDVIKRGPQEESEVEVSKDGDVFFDISGGSRAFIEEEEARDLLRPLADPRNSYTKIRFSNRSFGSEAAKFAASVLSSIKDQLTEVDLSDFVAGRPEAEALEVMNMFSSALEGSKLRYLNLSDNALGEKGIRAFASLINSQHDLEELYLMNDGISEDAARAVRELLPSTDKIRVLQFHNNMTGDEGATAIAEIVRECPSLEDFRCSSTRIGSEGGVALAEALEHCSHLKKLDLRDNMFGVEGGIALAKTLSVLTHLTEIYMSYLNLEDEGTEALSEALLKSAPSLEVLELAGNDITVKSTGNLAACIASKQSLAKLNLSENELKDEGTILIAKAVEGHDQLVEVDLSTNMIRRAGARALAQTVVKKNTFKLLNINGNFISEEGIDEVNDMFKDCLDKLVPLDDNDPEGEDFEDEDEEEEGEDGNELESKLGSLKIKQGEE.

A WPP region spans residues 1-115; it reads MDHSAKTTQN…EESEVEVSKD (115 aa). 9 LRR repeats span residues 208 to 231, 236 to 259, 264 to 287, 320 to 343, 353 to 376, 377 to 400, 405 to 428, 433 to 456, and 461 to 488; these read GSKL…AFAS, QHDL…AVRE, TDKI…AIAE, CSHL…ALAK, EIYM…LLKS, APSL…NLAA, KQSL…LIAK, HDQL…ALAQ, and KNTF…MFKD. The segment at 493–535 is disordered; that stretch reads LVPLDDNDPEGEDFEDEDEEEEGEDGNELESKLGSLKIKQGEE. The segment covering 497-520 has biased composition (acidic residues); that stretch reads DDNDPEGEDFEDEDEEEEGEDGNE.

This sequence belongs to the RNA1 family. As to quaternary structure, homodimer. Interacts with WIP1 through its WPP domain. Component of Ran complexes at least composed of WIT1 or WIT2, RANGAP1 or RANGAP2, and WIP1 or WIP2 or WIP3. Interacts directly with WIT1, WIP2 and WIP3. Interacts with POK1.

The protein resides in the cytoplasm. It is found in the nucleus envelope. Its subcellular location is the nucleus membrane. The protein localises to the cytoskeleton. It localises to the spindle. The protein resides in the phragmoplast. GTPase activator for the nuclear Ras-related regulatory protein Ran, converting it to the putatively inactive GDP-bound state. Plays a role in spatial signaling during cell division. This is RAN GTPase-activating protein 1 (RANGAP1) from Arabidopsis thaliana (Mouse-ear cress).